The primary structure comprises 394 residues: Elongation factor Tu (394 aa).

Residues 10-204 (KPHVNIGTIG…AVDSYIPQPI (195 aa)) enclose the tr-type G domain. A G1 region spans residues 19–26 (GHVDHGKT). GTP is bound at residue 19–26 (GHVDHGKT). Thr-26 lines the Mg(2+) pocket. Residues 60 to 64 (GITIS) form a G2 region. The G3 stretch occupies residues 81 to 84 (DCPG). GTP is bound by residues 81 to 85 (DCPGH) and 136 to 139 (NKVD). Residues 136-139 (NKVD) form a G4 region. Residues 174–176 (SAL) are G5.

It belongs to the TRAFAC class translation factor GTPase superfamily. Classic translation factor GTPase family. EF-Tu/EF-1A subfamily. In terms of assembly, monomer.

The protein resides in the cytoplasm. It carries out the reaction GTP + H2O = GDP + phosphate + H(+). GTP hydrolase that promotes the GTP-dependent binding of aminoacyl-tRNA to the A-site of ribosomes during protein biosynthesis. The sequence is that of Elongation factor Tu from Rickettsia prowazekii (strain Madrid E).